The primary structure comprises 453 residues: Ribulose bisphosphate carboxylase large chain (453 aa).

A propeptide spanning residues 1–2 (MS) is cleaved from the precursor. At Pro-3 the chain carries N-acetylproline. Lys-14 bears the N6,N6,N6-trimethyllysine mark. Residues Asn-123 and Thr-173 each contribute to the substrate site. Lys-175 serves as the catalytic Proton acceptor. Residue Lys-177 participates in substrate binding. Lys-201, Asp-203, and Glu-204 together coordinate Mg(2+). Lys-201 carries the post-translational modification N6-carboxylysine. His-294 functions as the Proton acceptor in the catalytic mechanism. Positions 295, 327, and 379 each coordinate substrate.

Belongs to the RuBisCO large chain family. Type I subfamily. Heterohexadecamer of 8 large chains and 8 small chains; disulfide-linked. The disulfide link is formed within the large subunit homodimers. Mg(2+) serves as cofactor. In terms of processing, the disulfide bond which can form in the large chain dimeric partners within the hexadecamer appears to be associated with oxidative stress and protein turnover.

It is found in the plastid. The protein localises to the chloroplast. It catalyses the reaction 2 (2R)-3-phosphoglycerate + 2 H(+) = D-ribulose 1,5-bisphosphate + CO2 + H2O. The catalysed reaction is D-ribulose 1,5-bisphosphate + O2 = 2-phosphoglycolate + (2R)-3-phosphoglycerate + 2 H(+). RuBisCO catalyzes two reactions: the carboxylation of D-ribulose 1,5-bisphosphate, the primary event in carbon dioxide fixation, as well as the oxidative fragmentation of the pentose substrate in the photorespiration process. Both reactions occur simultaneously and in competition at the same active site. The polypeptide is Ribulose bisphosphate carboxylase large chain (Crucianella angustifolia (Narrow-leaved crosswort)).